A 202-amino-acid chain; its full sequence is Protein-methionine-sulfoxide reductase heme-binding subunit MsrQ (202 aa).

The next 5 membrane-spanning stretches (helical) occupy residues 8–28, 82–102, 116–136, 149–169, and 171–191; these read IVWL…WLFW, LWCF…ELGI, PYLT…VTST, LLHN…LWSV, and IVSP…TWRY.

It belongs to the MsrQ family. Heterodimer of a catalytic subunit (MsrP) and a heme-binding subunit (MsrQ). FMN is required as a cofactor. The cofactor is heme b.

The protein localises to the cell inner membrane. Its function is as follows. Part of the MsrPQ system that repairs oxidized periplasmic proteins containing methionine sulfoxide residues (Met-O), using respiratory chain electrons. Thus protects these proteins from oxidative-stress damage caused by reactive species of oxygen and chlorine generated by the host defense mechanisms. MsrPQ is essential for the maintenance of envelope integrity under bleach stress, rescuing a wide series of structurally unrelated periplasmic proteins from methionine oxidation. MsrQ provides electrons for reduction to the reductase catalytic subunit MsrP, using the quinone pool of the respiratory chain. This Klebsiella pneumoniae subsp. pneumoniae (strain ATCC 700721 / MGH 78578) protein is Protein-methionine-sulfoxide reductase heme-binding subunit MsrQ.